Here is a 150-residue protein sequence, read N- to C-terminus: Large ribosomal subunit protein bL17 (150 aa).

Residues 126-150 (DRAKRREERLKAQREGRDHEEETDE) are disordered.

It belongs to the bacterial ribosomal protein bL17 family. In terms of assembly, part of the 50S ribosomal subunit. Contacts protein L32.

The chain is Large ribosomal subunit protein bL17 from Solibacter usitatus (strain Ellin6076).